A 266-amino-acid chain; its full sequence is Large ribosomal subunit protein eL8 (266 aa).

Residues 104 to 130 (PETKQEKKQRLLARAEQKAAGKGDTPT) show a composition bias toward basic and acidic residues. A disordered region spans residues 104-135 (PETKQEKKQRLLARAEQKAAGKGDTPTKRPPV).

Belongs to the eukaryotic ribosomal protein eL8 family. As to quaternary structure, component of the large ribosomal subunit.

It is found in the cytoplasm. Functionally, component of the large ribosomal subunit. The ribosome is a large ribonucleoprotein complex responsible for the synthesis of proteins in the cell. The sequence is that of Large ribosomal subunit protein eL8 (RPL7A) from Gallus gallus (Chicken).